The chain runs to 424 residues: Glutamate-1-semialdehyde 2,1-aminomutase (424 aa).

Lys-258 carries the N6-(pyridoxal phosphate)lysine modification.

The protein belongs to the class-III pyridoxal-phosphate-dependent aminotransferase family. HemL subfamily. It depends on pyridoxal 5'-phosphate as a cofactor.

The protein localises to the cytoplasm. It catalyses the reaction (S)-4-amino-5-oxopentanoate = 5-aminolevulinate. It participates in porphyrin-containing compound metabolism; protoporphyrin-IX biosynthesis; 5-aminolevulinate from L-glutamyl-tRNA(Glu): step 2/2. This is Glutamate-1-semialdehyde 2,1-aminomutase from Pyrobaculum islandicum (strain DSM 4184 / JCM 9189 / GEO3).